A 213-amino-acid chain; its full sequence is 3-isopropylmalate dehydratase small subunit (213 aa).

This sequence belongs to the LeuD family. LeuD type 1 subfamily. In terms of assembly, heterodimer of LeuC and LeuD.

The enzyme catalyses (2R,3S)-3-isopropylmalate = (2S)-2-isopropylmalate. The protein operates within amino-acid biosynthesis; L-leucine biosynthesis; L-leucine from 3-methyl-2-oxobutanoate: step 2/4. Functionally, catalyzes the isomerization between 2-isopropylmalate and 3-isopropylmalate, via the formation of 2-isopropylmaleate. The chain is 3-isopropylmalate dehydratase small subunit from Aromatoleum aromaticum (strain DSM 19018 / LMG 30748 / EbN1) (Azoarcus sp. (strain EbN1)).